The primary structure comprises 338 residues: Phenylalanine--tRNA ligase alpha subunit (338 aa).

Glutamate 259 serves as a coordination point for Mg(2+).

It belongs to the class-II aminoacyl-tRNA synthetase family. Phe-tRNA synthetase alpha subunit type 1 subfamily. As to quaternary structure, tetramer of two alpha and two beta subunits. The cofactor is Mg(2+).

Its subcellular location is the cytoplasm. The catalysed reaction is tRNA(Phe) + L-phenylalanine + ATP = L-phenylalanyl-tRNA(Phe) + AMP + diphosphate + H(+). In Janthinobacterium sp. (strain Marseille) (Minibacterium massiliensis), this protein is Phenylalanine--tRNA ligase alpha subunit.